We begin with the raw amino-acid sequence, 1042 residues long: Isoleucine--tRNA ligase (1042 aa).

Positions 59-69 (PFANGLPHYGH) match the 'HIGH' region motif. The 'KMSKS' region motif lies at 619 to 623 (KMSKS). Lys-622 lines the ATP pocket.

It belongs to the class-I aminoacyl-tRNA synthetase family. IleS type 2 subfamily. Monomer. It depends on Zn(2+) as a cofactor.

The protein resides in the cytoplasm. It catalyses the reaction tRNA(Ile) + L-isoleucine + ATP = L-isoleucyl-tRNA(Ile) + AMP + diphosphate. Functionally, catalyzes the attachment of isoleucine to tRNA(Ile). As IleRS can inadvertently accommodate and process structurally similar amino acids such as valine, to avoid such errors it has two additional distinct tRNA(Ile)-dependent editing activities. One activity is designated as 'pretransfer' editing and involves the hydrolysis of activated Val-AMP. The other activity is designated 'posttransfer' editing and involves deacylation of mischarged Val-tRNA(Ile). The protein is Isoleucine--tRNA ligase of Nocardia farcinica (strain IFM 10152).